The chain runs to 516 residues: 2,3-bisphosphoglycerate-independent phosphoglycerate mutase (516 aa).

Mn(2+) contacts are provided by Asp-13 and Ser-63. Ser-63 functions as the Phosphoserine intermediate in the catalytic mechanism. Substrate contacts are provided by residues His-124, 154–155 (RD), Arg-186, Arg-192, 262–265 (RPDR), and Lys-337. Residues Asp-404, His-408, Asp-445, His-446, and His-464 each coordinate Mn(2+).

It belongs to the BPG-independent phosphoglycerate mutase family. Monomer. Mn(2+) is required as a cofactor.

It carries out the reaction (2R)-2-phosphoglycerate = (2R)-3-phosphoglycerate. It functions in the pathway carbohydrate degradation; glycolysis; pyruvate from D-glyceraldehyde 3-phosphate: step 3/5. Catalyzes the interconversion of 2-phosphoglycerate and 3-phosphoglycerate. The sequence is that of 2,3-bisphosphoglycerate-independent phosphoglycerate mutase from Cellvibrio japonicus (strain Ueda107) (Pseudomonas fluorescens subsp. cellulosa).